Consider the following 141-residue polypeptide: Putative pre-16S rRNA nuclease (141 aa).

This sequence belongs to the YqgF nuclease family.

The protein localises to the cytoplasm. Could be a nuclease involved in processing of the 5'-end of pre-16S rRNA. This chain is Putative pre-16S rRNA nuclease, found in Desulforudis audaxviator (strain MP104C).